Reading from the N-terminus, the 206-residue chain is Small ribosomal subunit protein uS4 (206 aa).

One can recognise an S4 RNA-binding domain in the interval 98 to 163; that stretch reads MRLDNIVYRL…SEKFKTFVEN (66 aa).

This sequence belongs to the universal ribosomal protein uS4 family. In terms of assembly, part of the 30S ribosomal subunit. Contacts protein S5. The interaction surface between S4 and S5 is involved in control of translational fidelity.

In terms of biological role, one of the primary rRNA binding proteins, it binds directly to 16S rRNA where it nucleates assembly of the body of the 30S subunit. Its function is as follows. With S5 and S12 plays an important role in translational accuracy. The sequence is that of Small ribosomal subunit protein uS4 from Clostridium beijerinckii (strain ATCC 51743 / NCIMB 8052) (Clostridium acetobutylicum).